Consider the following 156-residue polypeptide: Small ribosomal subunit protein uS7 (156 aa).

The protein belongs to the universal ribosomal protein uS7 family. Part of the 30S ribosomal subunit. Contacts proteins S9 and S11.

Its function is as follows. One of the primary rRNA binding proteins, it binds directly to 16S rRNA where it nucleates assembly of the head domain of the 30S subunit. Is located at the subunit interface close to the decoding center, probably blocks exit of the E-site tRNA. This is Small ribosomal subunit protein uS7 from Leptothrix cholodnii (strain ATCC 51168 / LMG 8142 / SP-6) (Leptothrix discophora (strain SP-6)).